The chain runs to 334 residues: Protein-methionine-sulfoxide reductase catalytic subunit MsrP (334 aa).

The tat-type signal signal peptide spans methionine 1 to alanine 44. Mo-molybdopterin is bound by residues asparagine 88, tyrosine 91 to glutamate 92, cysteine 146, threonine 181, asparagine 233, arginine 238, and glycine 249 to lysine 251.

Belongs to the MsrP family. Heterodimer of a catalytic subunit (MsrP) and a heme-binding subunit (MsrQ). The cofactor is Mo-molybdopterin. In terms of processing, predicted to be exported by the Tat system. The position of the signal peptide cleavage has not been experimentally proven.

Its subcellular location is the periplasm. It carries out the reaction L-methionyl-[protein] + a quinone + H2O = L-methionyl-(S)-S-oxide-[protein] + a quinol. It catalyses the reaction L-methionyl-[protein] + a quinone + H2O = L-methionyl-(R)-S-oxide-[protein] + a quinol. Part of the MsrPQ system that repairs oxidized periplasmic proteins containing methionine sulfoxide residues (Met-O), using respiratory chain electrons. Thus protects these proteins from oxidative-stress damage caused by reactive species of oxygen and chlorine generated by the host defense mechanisms. MsrPQ is essential for the maintenance of envelope integrity under bleach stress, rescuing a wide series of structurally unrelated periplasmic proteins from methionine oxidation, including the primary periplasmic chaperone SurA and the lipoprotein Pal. The catalytic subunit MsrP is non-stereospecific, being able to reduce both (R-) and (S-) diastereoisomers of methionine sulfoxide. In Escherichia fergusonii (strain ATCC 35469 / DSM 13698 / CCUG 18766 / IAM 14443 / JCM 21226 / LMG 7866 / NBRC 102419 / NCTC 12128 / CDC 0568-73), this protein is Protein-methionine-sulfoxide reductase catalytic subunit MsrP.